Consider the following 147-residue polypeptide: Prefoldin subunit alpha 2 (147 aa).

The protein belongs to the prefoldin subunit alpha family. In terms of assembly, heterohexamer of two alpha and four beta subunits.

Its subcellular location is the cytoplasm. Molecular chaperone capable of stabilizing a range of proteins. Seems to fulfill an ATP-independent, HSP70-like function in archaeal de novo protein folding. The protein is Prefoldin subunit alpha 2 (pfdA2) of Methanocaldococcus jannaschii (strain ATCC 43067 / DSM 2661 / JAL-1 / JCM 10045 / NBRC 100440) (Methanococcus jannaschii).